Reading from the N-terminus, the 51-residue chain is Large ribosomal subunit protein eL39 (51 aa).

The protein belongs to the eukaryotic ribosomal protein eL39 family.

The chain is Large ribosomal subunit protein eL39 (rpl39e) from Pyrococcus horikoshii (strain ATCC 700860 / DSM 12428 / JCM 9974 / NBRC 100139 / OT-3).